A 141-amino-acid polypeptide reads, in one-letter code: Aspartate 1-decarboxylase 1 (141 aa).

The active-site Schiff-base intermediate with substrate; via pyruvic acid is the S25. Position 25 is a pyruvic acid (Ser) (S25). T57 lines the substrate pocket. Y58 serves as the catalytic Proton donor. Residue 73–75 (GPA) coordinates substrate.

Belongs to the PanD family. As to quaternary structure, heterooctamer of four alpha and four beta subunits. Pyruvate is required as a cofactor. Is synthesized initially as an inactive proenzyme, which is activated by self-cleavage at a specific serine bond to produce a beta-subunit with a hydroxyl group at its C-terminus and an alpha-subunit with a pyruvoyl group at its N-terminus.

The protein localises to the cytoplasm. The enzyme catalyses L-aspartate + H(+) = beta-alanine + CO2. It participates in cofactor biosynthesis; (R)-pantothenate biosynthesis; beta-alanine from L-aspartate: step 1/1. Functionally, catalyzes the pyruvoyl-dependent decarboxylation of aspartate to produce beta-alanine. This is Aspartate 1-decarboxylase 1 from Paenarthrobacter aurescens (strain TC1).